A 1004-amino-acid chain; its full sequence is Retrovirus-related Pol polyprotein from type-1 retrotransposable element R1 (1004 aa).

The Reverse transcriptase domain occupies 450-717 (QCLLESYFPQ…SEVKHLGIFV (268 aa)). The interval 853 to 1004 (LSGSQFKELL…RLMRGMRIRE (152 aa)) is nucleic acid-binding endonuclease.

It catalyses the reaction DNA(n) + a 2'-deoxyribonucleoside 5'-triphosphate = DNA(n+1) + diphosphate. The polypeptide is Retrovirus-related Pol polyprotein from type-1 retrotransposable element R1 (Bradysia coprophila (Dark-winged fungus gnat)).